The chain runs to 145 residues: MGKRKKSTRKPTKRLVQKLDTKFNCLFCNHEKSVSCTLDKKNSIGTLSCKICGQSFQTRINSLSQPVDVYSDWFDAVEEVNSGRGSDTDDGDEGSDSDYESDSEQDAKTQNDGEIDSDEEEVDSDEERIGQVKRGRGALVDSDDE.

4 residues coordinate Zn(2+): C25, C28, C49, and C52. Residue S55 is modified to Phosphoserine. The segment at 80-145 is disordered; the sequence is VNSGRGSDTD…RGALVDSDDE (66 aa). Acidic residues-rich tracts occupy residues 88–104 and 113–126; these read TDDGDEGSDSDYESDSE and GEIDSDEEEVDSDE. S117, S124, and S142 each carry phosphoserine.

The protein belongs to the ELOF1 family.

The protein resides in the nucleus. Transcription elongation factor implicated in the maintenance of proper chromatin structure in actively transcribed regions. The chain is Transcription elongation factor 1 (ELF1) from Saccharomyces cerevisiae (strain ATCC 204508 / S288c) (Baker's yeast).